A 380-amino-acid chain; its full sequence is Ribosomal RNA small subunit methyltransferase, mitochondrial (380 aa).

Residues 1–26 (MILRLKDQTLIKINSTRSYLSSLVFR) constitute a mitochondrion transit peptide. 6 residues coordinate S-adenosyl-L-methionine: histidine 70, leucine 72, glycine 97, glutamate 118, aspartate 146, and asparagine 161.

This sequence belongs to the class I-like SAM-binding methyltransferase superfamily. rRNA adenine N(6)-methyltransferase family.

The protein localises to the mitochondrion. The catalysed reaction is adenosine(1914)/adenosine(1915) in 18S rRNA + 4 S-adenosyl-L-methionine = N(6)-dimethyladenosine(1914)/N(6)-dimethyladenosine(1915) in 18S rRNA + 4 S-adenosyl-L-homocysteine + 4 H(+). N6-adenine methyltransferase which modifies the AA dinucleotide at the plant mitochondrial 18S rRNA nucleotides A1914 and A1915. Not active as mitochondrial transcription factor. The protein is Ribosomal RNA small subunit methyltransferase, mitochondrial of Arabidopsis thaliana (Mouse-ear cress).